The chain runs to 299 residues: MDNHIKGALLVCLAATMWGFDGIALTPRLFSLHVPFVVFILHLLPLILMSILFGKEEVKNIKKLQKNDLFFFFCVALFGGCLGTLCIVKALFLVNFKHLTVVTLLQKLQPIFAIILARLLLKEKLKRAYLFWGFLALLGGYLLTFEFHLPEFVSSDNLLPASLYSLLAAFSFGSATVFGKRILKSASFRTALYLRYLMTSCIMFVIVTFTSGFGDFLVATAGNWLIFVIIALTTGSGAILLYYFGLRYITAKVATMCELCFPISSVVFDYLINGNVLSPVQIASAILMIISIIKISKLN.

2 EamA domains span residues 6 to 144 (KGAL…YLLT) and 162 to 294 (SLYS…SIIK). 10 helical membrane passes run 7–27 (GALLVCLAATMWGFDGIALTP), 34–54 (VPFVVFILHLLPLILMSILFG), 68–88 (DLFFFFCVALFGGCLGTLCIV), 101–121 (VVTLLQKLQPIFAIILARLLL), 129–149 (YLFWGFLALLGGYLLTFEFHL), 158–178 (LLPASLYSLLAAFSFGSATVF), 202–222 (IMFVIVTFTSGFGDFLVATAG), 224–244 (WLIFVIIALTTGSGAILLYYF), 253–273 (VATMCELCFPISSVVFDYLIN), and 276–296 (VLSPVQIASAILMIISIIKIS).

The protein belongs to the EamA transporter family.

The protein localises to the cell membrane. In terms of biological role, transports riboflavin into the cell. The protein is Riboflavin transporter ImpX of Fusobacterium nucleatum subsp. nucleatum (strain ATCC 23726 / VPI 4351).